The following is a 548-amino-acid chain: MDRFLTYFQVRGERANAVRLFGEISEQIDCSHLKRDCFVNGICARQHFKECCNIATDNGSRTNADKLVALALRALLDRQTIWTCVIKNADYVSQYADEQMEEEVNKLYDVYLQSGTREEFEGFRQRNRPSRVVMDDSCSMLSYFYIPMNQGNPAPVAKLSRWGQFGICYYDRTNVDGLIPYDEIGLAQAIDGLKDLIEGRLPVCPYTGANGRINAVLHLPLEMEVIMAVQENATQLMRRAAQDFKFITHAGWRLYPRLLRQRFAIEDATEGVIHHVMLGHLRYYDEDTSIVKYRFLNDGSLDWRTWTIPLHLMRTARLGHLQPESILVFMHKSLHVRYALWLTSLCLTQSRWLIQKLPELTGGTDVLYTRAYVHADNHKVPNVRDLMMNEVFRKIDDHWVIQKCHTTKEAITVTAIQIQRSIRGDGQWDTPMFHQSMALLTRLIVYWLTDVTERSAIFRLTCFAIFGCKPTARGRYIDWDDLGTFMKNVLDGRDLTVLEDETCFISMMRMAMLHVQRSKVVCATVLEAPLEIQQVGQIVEVPFDFMHN.

This sequence belongs to the orbivirus non-structural protein NS1 family.

This is Non-structural protein NS1 (Segment-5) from African horse sickness virus (AHSV).